The chain runs to 776 residues: Chitin synthase 1 (776 aa).

The next 6 membrane-spanning stretches (helical) occupy residues 451 to 471, 487 to 507, 523 to 543, 558 to 578, 695 to 714, and 723 to 743; these read LVSLLFSFFSLSNFYLTFYFL, FWIFTLFNYLCIGVLTSLFIV, LIILLTICALYALVVGFVFVI, VLVSIVVSLLSTYGLYTLMSI, VVLFWMIANLVFIMTMVQVY, and IYLAFILWAVAVLALVRAIGS.

It belongs to the chitin synthase family.

It localises to the cell membrane. The catalysed reaction is [(1-&gt;4)-N-acetyl-beta-D-glucosaminyl](n) + UDP-N-acetyl-alpha-D-glucosamine = [(1-&gt;4)-N-acetyl-beta-D-glucosaminyl](n+1) + UDP + H(+). Requires proteolytic activation. Functionally, polymerizes chitin, a structural polymer of the cell wall and septum, by transferring the sugar moiety of UDP-GlcNAc to the non-reducing end of the growing chitin polymer. Also involved in forming cross walls in the hyphal phase. This chain is Chitin synthase 1 (CHS1), found in Candida albicans (Yeast).